The chain runs to 92 residues: DNA-binding protein HU-alpha (92 aa).

Belongs to the bacterial histone-like protein family. As to quaternary structure, heterodimer of an alpha and a beta chain.

Functionally, histone-like DNA-binding protein which is capable of wrapping DNA to stabilize it, and thus to prevent its denaturation under extreme environmental conditions. The polypeptide is DNA-binding protein HU-alpha (hupA) (Burkholderia pseudomallei (strain K96243)).